Here is a 320-residue protein sequence, read N- to C-terminus: Olfactory receptor 5C1 (320 aa).

Over 1–29 (MNSENLTRAAVAPAEFVLLGITNRWDLRV) the chain is Extracellular. An N-linked (GlcNAc...) asparagine glycan is attached at N5. A helical membrane pass occupies residues 30–50 (ALFLTCLPVYLVSLLGNMGMA). The Cytoplasmic segment spans residues 51–58 (LLIRMDAR). Residues 59 to 79 (LHTPMYFFLANLSLLDACYSS) traverse the membrane as a helical segment. Residues 80–103 (AIGPKMLVDLLLPRATIPYTACAL) are Extracellular-facing. C101 and C193 are disulfide-bonded. The helical transmembrane segment at 104–124 (QMFVFAGLADTECCLLAAMAY) threads the bilayer. Residues 125-143 (DRYVAIRNPLLYTTAMSQR) lie on the Cytoplasmic side of the membrane. Residues 144-164 (LCLALLGASGLGGAVSAFVHT) form a helical membrane-spanning segment. Residues 165 to 200 (TLTFRLSFCRSRKINSFFCDIPPLLAISCSDTSLNE) lie on the Extracellular side of the membrane. Residues 201–221 (LLLFAICGFIQTATVLAITVS) form a helical membrane-spanning segment. The Cytoplasmic portion of the chain corresponds to 222 to 241 (YGFIAGAVIHMRSVEGSRRA). A helical transmembrane segment spans residues 242 to 262 (ASTGGSHLTAVAMMYGTLIFM). Over 263-275 (YLRPSSSYALDTD) the chain is Extracellular. A helical transmembrane segment spans residues 276–296 (KMASVFYTLVIPSLNPLIYSL). Topologically, residues 297–320 (RNKEVKEALRQTWSRFHCPGQGSQ) are cytoplasmic.

The protein belongs to the G-protein coupled receptor 1 family.

The protein localises to the cell membrane. In terms of biological role, odorant receptor. This is Olfactory receptor 5C1 (OR5C1) from Homo sapiens (Human).